A 364-amino-acid chain; its full sequence is tRNA N6-adenosine threonylcarbamoyltransferase (364 aa).

Fe cation is bound by residues histidine 115 and histidine 119. Substrate-binding positions include 137–141 (LVSGG), aspartate 170, glycine 183, and asparagine 288. Aspartate 316 is a Fe cation binding site.

Belongs to the KAE1 / TsaD family. It depends on Fe(2+) as a cofactor.

Its subcellular location is the cytoplasm. The enzyme catalyses L-threonylcarbamoyladenylate + adenosine(37) in tRNA = N(6)-L-threonylcarbamoyladenosine(37) in tRNA + AMP + H(+). Its function is as follows. Required for the formation of a threonylcarbamoyl group on adenosine at position 37 (t(6)A37) in tRNAs that read codons beginning with adenine. Is involved in the transfer of the threonylcarbamoyl moiety of threonylcarbamoyl-AMP (TC-AMP) to the N6 group of A37, together with TsaE and TsaB. TsaD likely plays a direct catalytic role in this reaction. In Bartonella tribocorum (strain CIP 105476 / IBS 506), this protein is tRNA N6-adenosine threonylcarbamoyltransferase.